The following is a 719-amino-acid chain: Fatty acid oxidation complex subunit alpha (719 aa).

An enoyl-CoA hydratase/isomerase region spans residues 1–190; it reads MIYQGNRITV…KLGLVDAVVA (190 aa). Position 298 (D298) interacts with substrate. Residues 313-719 form a 3-hydroxyacyl-CoA dehydrogenase region; it reads HDINEAAVLG…AAGETFYPKA (407 aa). NAD(+) contacts are provided by residues M326, D345, 402-404, K409, and S431; that span reads VVE. The For 3-hydroxyacyl-CoA dehydrogenase activity role is filled by H452. NAD(+) is bound at residue N455. N502 is a binding site for substrate.

It in the N-terminal section; belongs to the enoyl-CoA hydratase/isomerase family. This sequence in the C-terminal section; belongs to the 3-hydroxyacyl-CoA dehydrogenase family. In terms of assembly, heterotetramer of two alpha chains (FadB) and two beta chains (FadA).

It catalyses the reaction a (3S)-3-hydroxyacyl-CoA + NAD(+) = a 3-oxoacyl-CoA + NADH + H(+). The catalysed reaction is a (3S)-3-hydroxyacyl-CoA = a (2E)-enoyl-CoA + H2O. It carries out the reaction a 4-saturated-(3S)-3-hydroxyacyl-CoA = a (3E)-enoyl-CoA + H2O. The enzyme catalyses (3S)-3-hydroxybutanoyl-CoA = (3R)-3-hydroxybutanoyl-CoA. It catalyses the reaction a (3Z)-enoyl-CoA = a 4-saturated (2E)-enoyl-CoA. The catalysed reaction is a (3E)-enoyl-CoA = a 4-saturated (2E)-enoyl-CoA. It participates in lipid metabolism; fatty acid beta-oxidation. Functionally, involved in the aerobic and anaerobic degradation of long-chain fatty acids via beta-oxidation cycle. Catalyzes the formation of 3-oxoacyl-CoA from enoyl-CoA via L-3-hydroxyacyl-CoA. It can also use D-3-hydroxyacyl-CoA and cis-3-enoyl-CoA as substrate. The sequence is that of Fatty acid oxidation complex subunit alpha from Psychrobacter sp. (strain PRwf-1).